Reading from the N-terminus, the 369-residue chain is Phenylalanine--tRNA ligase alpha subunit (369 aa).

Mg(2+) is bound at residue Glu-269.

It belongs to the class-II aminoacyl-tRNA synthetase family. Phe-tRNA synthetase alpha subunit type 1 subfamily. As to quaternary structure, tetramer of two alpha and two beta subunits. Mg(2+) serves as cofactor.

The protein localises to the cytoplasm. It carries out the reaction tRNA(Phe) + L-phenylalanine + ATP = L-phenylalanyl-tRNA(Phe) + AMP + diphosphate + H(+). This is Phenylalanine--tRNA ligase alpha subunit from Nitrobacter winogradskyi (strain ATCC 25391 / DSM 10237 / CIP 104748 / NCIMB 11846 / Nb-255).